The chain runs to 382 residues: Lipid-A-disaccharide synthase (382 aa).

It belongs to the LpxB family.

The enzyme catalyses 2-N,3-O-bis[(3R)-3-hydroxytetradecanoyl]-alpha-D-glucosaminyl 1-phosphate + UDP-2-N,3-O-bis[(3R)-3-hydroxytetradecanoyl]-alpha-D-glucosamine = lipid A disaccharide (E. coli) + UDP + H(+). The catalysed reaction is a lipid X + a UDP-2-N,3-O-bis[(3R)-3-hydroxyacyl]-alpha-D-glucosamine = a lipid A disaccharide + UDP + H(+). The protein operates within glycolipid biosynthesis; lipid IV(A) biosynthesis; lipid IV(A) from (3R)-3-hydroxytetradecanoyl-[acyl-carrier-protein] and UDP-N-acetyl-alpha-D-glucosamine: step 5/6. In terms of biological role, condensation of UDP-2,3-diacylglucosamine and 2,3-diacylglucosamine-1-phosphate to form lipid A disaccharide, a precursor of lipid A, a phosphorylated glycolipid that anchors the lipopolysaccharide to the outer membrane of the cell. In Shigella dysenteriae serotype 1 (strain Sd197), this protein is Lipid-A-disaccharide synthase.